We begin with the raw amino-acid sequence, 471 residues long: Glutamate--tRNA ligase (471 aa).

Positions 9–19 (PSPTGFLHVGG) match the 'HIGH' region motif. Residues Cys98, Cys100, Cys125, and Asp127 each contribute to the Zn(2+) site. The 'KMSKS' region motif lies at 237-241 (KLSKR). Position 240 (Lys240) interacts with ATP.

The protein belongs to the class-I aminoacyl-tRNA synthetase family. Glutamate--tRNA ligase type 1 subfamily. In terms of assembly, monomer. The cofactor is Zn(2+).

Its subcellular location is the cytoplasm. The enzyme catalyses tRNA(Glu) + L-glutamate + ATP = L-glutamyl-tRNA(Glu) + AMP + diphosphate. In terms of biological role, catalyzes the attachment of glutamate to tRNA(Glu) in a two-step reaction: glutamate is first activated by ATP to form Glu-AMP and then transferred to the acceptor end of tRNA(Glu). The chain is Glutamate--tRNA ligase from Aeromonas hydrophila subsp. hydrophila (strain ATCC 7966 / DSM 30187 / BCRC 13018 / CCUG 14551 / JCM 1027 / KCTC 2358 / NCIMB 9240 / NCTC 8049).